Reading from the N-terminus, the 148-residue chain is L-alanine exporter AlaE (148 aa).

A run of 4 helical transmembrane segments spans residues 18 to 38 (FALV…ISGM), 49 to 69 (VSIP…DAFI), 88 to 108 (LLAY…SVGA), and 115 to 135 (TAVA…GYFL).

The protein belongs to the AlaE exporter family.

Its subcellular location is the cell inner membrane. Its function is as follows. Exports L-alanine. The polypeptide is L-alanine exporter AlaE (Yersinia enterocolitica subsp. palearctica serotype O:3 (strain DSM 13030 / CIP 106945 / Y11)).